The sequence spans 461 residues: Photosystem II CP43 reaction center protein (461 aa).

A propeptide spanning residues 1 to 2 (ME) is cleaved from the precursor. An N-acetylthreonine modification is found at Thr3. Thr3 carries the phosphothreonine modification. Transmembrane regions (helical) follow at residues 57–81 (LFEVAHFVPEKPMYEQGLILLPHLA), 122–143 (LLGPETLEESFPFFGYVWKDRN), 166–188 (KALYFGGVYDTWAPGGGDVRKIS), 243–263 (KPFAWARRALVWSGEAYLSYS), and 279–300 (WFNNTAYPSEFYGPTGPEASQA). Glu355 serves as a coordination point for [CaMn4O5] cluster. A helical membrane pass occupies residues 435–459 (RARAAAAGFEKGIDRDFEPVLSMTP).

The protein belongs to the PsbB/PsbC family. PsbC subfamily. As to quaternary structure, PSII is composed of 1 copy each of membrane proteins PsbA, PsbB, PsbC, PsbD, PsbE, PsbF, PsbH, PsbI, PsbJ, PsbK, PsbL, PsbM, PsbT, PsbX, PsbY, PsbZ, Psb30/Ycf12, at least 3 peripheral proteins of the oxygen-evolving complex and a large number of cofactors. It forms dimeric complexes. Requires Binds multiple chlorophylls and provides some of the ligands for the Ca-4Mn-5O cluster of the oxygen-evolving complex. It may also provide a ligand for a Cl- that is required for oxygen evolution. PSII binds additional chlorophylls, carotenoids and specific lipids. as cofactor.

It is found in the plastid. Its subcellular location is the chloroplast thylakoid membrane. In terms of biological role, one of the components of the core complex of photosystem II (PSII). It binds chlorophyll and helps catalyze the primary light-induced photochemical processes of PSII. PSII is a light-driven water:plastoquinone oxidoreductase, using light energy to abstract electrons from H(2)O, generating O(2) and a proton gradient subsequently used for ATP formation. The chain is Photosystem II CP43 reaction center protein from Trachelium caeruleum (Blue throatwort).